We begin with the raw amino-acid sequence, 264 residues long: MNTRPADFSAVQAATSLTQFRSASPLVHCLTNDVVQSFTANVLLALNASPAMVVDPEEAAQFSAVADALLINVGTLERSRAEAMRTAVNSAHQAGTPWVLDPVAVGGLIFRSEFCRELLAWKPAAIRGNASEIMALAGLAAQGRGVDSADDSLAALPAARELARQVGTIVAVTGAVDYVTDGERDIAITGGDSMMTRVVGTGCALSAVVAGFCSLEGDRVSHVAAACYVMALAGQQAASVSQGTGSFIPNFLDRLYTLRAEDLA.

M52 contacts substrate. 2 residues coordinate ATP: R127 and T173. G200 provides a ligand contact to substrate.

This sequence belongs to the Thz kinase family. Requires Mg(2+) as cofactor.

It catalyses the reaction 5-(2-hydroxyethyl)-4-methylthiazole + ATP = 4-methyl-5-(2-phosphooxyethyl)-thiazole + ADP + H(+). Its pathway is cofactor biosynthesis; thiamine diphosphate biosynthesis; 4-methyl-5-(2-phosphoethyl)-thiazole from 5-(2-hydroxyethyl)-4-methylthiazole: step 1/1. Functionally, catalyzes the phosphorylation of the hydroxyl group of 4-methyl-5-beta-hydroxyethylthiazole (THZ). This is Hydroxyethylthiazole kinase from Pectobacterium carotovorum subsp. carotovorum (strain PC1).